Reading from the N-terminus, the 1169-residue chain is Transcription-repair-coupling factor (1169 aa).

Residues 634-795 (DMERERPMDR…MLGVRDLSVI (162 aa)) form the Helicase ATP-binding domain. ATP is bound at residue 647-654 (GDVGYGKT). Residues 748–751 (DEEQ) carry the DEEQ box motif. One can recognise a Helicase C-terminal domain in the interval 809-970 (VLEQNSNFIK…GFKIAMRDLN (162 aa)).

In the N-terminal section; belongs to the UvrB family. It in the C-terminal section; belongs to the helicase family. RecG subfamily.

It localises to the cytoplasm. Couples transcription and DNA repair by recognizing RNA polymerase (RNAP) stalled at DNA lesions. Mediates ATP-dependent release of RNAP and its truncated transcript from the DNA, and recruitment of nucleotide excision repair machinery to the damaged site. The polypeptide is Transcription-repair-coupling factor (Staphylococcus haemolyticus (strain JCSC1435)).